A 161-amino-acid chain; its full sequence is MTLSIIVAHDKQRVIGYQNQLPWHLPNDLKHIKQLTTGNTLVMARKTFNSIGKPLPNRRNVVLTNQASFHHEGVDVINSLDEIKELSGHVFIFGGQTLYEAMIDQVDDMYITVIDGKFQGDTFFPPYTFENWEVESSVEGQLDEKNTIPHTFLHLVRRKGK.

Positions 2–157 constitute a DHFR domain; it reads TLSIIVAHDK…IPHTFLHLVR (156 aa). A substrate-binding site is contributed by 6–8; that stretch reads IVA. NADP(+)-binding positions include 7-8 and 15-20; these read VA and IGYQNQ. Asp28 provides a ligand contact to substrate. 44-47 provides a ligand contact to NADP(+); the sequence is ARKT. Substrate is bound at residue Arg58. Residues 63–66 and 93–98 contribute to the NADP(+) site; these read LTNQ and FGGQTL. Thr112 is a substrate binding site.

This sequence belongs to the dihydrofolate reductase family.

The enzyme catalyses (6S)-5,6,7,8-tetrahydrofolate + NADP(+) = 7,8-dihydrofolate + NADPH + H(+). Its pathway is cofactor biosynthesis; tetrahydrofolate biosynthesis; 5,6,7,8-tetrahydrofolate from 7,8-dihydrofolate: step 1/1. Key enzyme in folate metabolism. Catalyzes an essential reaction for de novo glycine and purine synthesis, and for DNA precursor synthesis. This chain is Dihydrofolate reductase type 1 from Tn4003 (dfrA), found in Staphylococcus aureus.